Here is a 550-residue protein sequence, read N- to C-terminus: Probable methionine--tRNA ligase, cytoplasmic (550 aa).

Positions 10-20 (PYVNNQPHLGN) match the 'HIGH' region motif. The short motif at 328–332 (KFSKS) is the 'KMSKS' region element. Lys-331 is an ATP binding site.

The protein belongs to the class-I aminoacyl-tRNA synthetase family.

The protein localises to the cytoplasm. The catalysed reaction is tRNA(Met) + L-methionine + ATP = L-methionyl-tRNA(Met) + AMP + diphosphate. This is Probable methionine--tRNA ligase, cytoplasmic from Encephalitozoon cuniculi (strain GB-M1) (Microsporidian parasite).